We begin with the raw amino-acid sequence, 223 residues long: Small ribosomal subunit protein uS3 (223 aa).

The 69-residue stretch at Ile-38–Lys-106 folds into the KH type-2 domain.

Belongs to the universal ribosomal protein uS3 family. As to quaternary structure, part of the 30S ribosomal subunit. Forms a tight complex with proteins S10 and S14.

Binds the lower part of the 30S subunit head. Binds mRNA in the 70S ribosome, positioning it for translation. This chain is Small ribosomal subunit protein uS3, found in Pediococcus pentosaceus (strain ATCC 25745 / CCUG 21536 / LMG 10740 / 183-1w).